Reading from the N-terminus, the 204-residue chain is GTP cyclohydrolase 1 (204 aa).

C92, H95, and C165 together coordinate Zn(2+).

This sequence belongs to the GTP cyclohydrolase I family. In terms of assembly, homomer.

It catalyses the reaction GTP + H2O = 7,8-dihydroneopterin 3'-triphosphate + formate + H(+). It participates in cofactor biosynthesis; 7,8-dihydroneopterin triphosphate biosynthesis; 7,8-dihydroneopterin triphosphate from GTP: step 1/1. This chain is GTP cyclohydrolase 1, found in Mycolicibacterium paratuberculosis (strain ATCC BAA-968 / K-10) (Mycobacterium paratuberculosis).